A 395-amino-acid chain; its full sequence is Acid ceramidase (395 aa).

An N-terminal signal peptide occupies residues methionine 1–alanine 21. A disulfide bridge links cysteine 31 with cysteine 340. Cysteine 143 functions as the Nucleophile in the catalytic mechanism. 4 N-linked (GlcNAc...) asparagine glycosylation sites follow: asparagine 173, asparagine 259, asparagine 342, and asparagine 348. Cysteine 388 and cysteine 392 are joined by a disulfide.

The protein belongs to the acid ceramidase family. As to quaternary structure, heterodimer; disulfide-linked. The heterodimer is composed of the disulfide-linked alpha and beta chains produced by autocatalytic cleavage of the precursor. In terms of processing, N-glycosylated. Proteolytically cleaved into two chains alpha and beta that remain associated via a disulfide bond. Cleavage gives rise to a conformation change that activates the enzyme. The same catalytic Cys residue mediates the autoproteolytic cleavage and subsequent hydrolysis of lipid substrates. The beta chain may undergo an additional C-terminal processing.

Its subcellular location is the lysosome. It localises to the secreted. It catalyses the reaction an N-acylsphing-4-enine + H2O = sphing-4-enine + a fatty acid. The enzyme catalyses N-dodecanoylsphing-4-enine + H2O = dodecanoate + sphing-4-enine. The catalysed reaction is N-tetradecanoylsphing-4-enine + H2O = tetradecanoate + sphing-4-enine. It carries out the reaction N-hexadecanoylsphing-4-enine + H2O = sphing-4-enine + hexadecanoate. It catalyses the reaction N-octadecanoylsphing-4-enine + H2O = sphing-4-enine + octadecanoate. The enzyme catalyses N-dodecanoyl-(4R)-hydroxysphinganine + H2O = (4R)-hydroxysphinganine + dodecanoate. The catalysed reaction is N-(dodecanoyl)-sphinganine + H2O = dodecanoate + sphinganine. It carries out the reaction N-(acetyl)-sphing-4-enine + H2O = sphing-4-enine + acetate. It catalyses the reaction N-(hexanoyl)sphing-4-enine + H2O = hexanoate + sphing-4-enine. The enzyme catalyses N-octanoylsphing-4-enine + H2O = octanoate + sphing-4-enine. The catalysed reaction is N-(9Z-octadecenoyl)-sphing-4-enine + H2O = sphing-4-enine + (9Z)-octadecenoate. It carries out the reaction N-dodecanoylethanolamine + H2O = dodecanoate + ethanolamine. The protein operates within lipid metabolism; sphingolipid metabolism. Functionally, lysosomal ceramidase that hydrolyzes sphingolipid ceramides into sphingosine and free fatty acids at acidic pH. Ceramides, sphingosine, and its phosphorylated form sphingosine-1-phosphate are bioactive lipids that mediate cellular signaling pathways regulating several biological processes including cell proliferation, apoptosis and differentiation. Has a higher catalytic efficiency towards C12-ceramides versus other ceramides. Also catalyzes the reverse reaction allowing the synthesis of ceramides from fatty acids and sphingosine. For the reverse synthetic reaction, the natural sphingosine D-erythro isomer is more efficiently utilized as a substrate compared to D-erythro-dihydrosphingosine and D-erythro-phytosphingosine, while the fatty acids with chain lengths of 12 or 14 carbons are the most efficiently used. Also has an N-acylethanolamine hydrolase activity. By regulating the levels of ceramides, sphingosine and sphingosine-1-phosphate in the epidermis, mediates the calcium-induced differentiation of epidermal keratinocytes. Also indirectly regulates tumor necrosis factor/TNF-induced apoptosis. By regulating the intracellular balance between ceramides and sphingosine, in adrenocortical cells, probably also acts as a regulator of steroidogenesis. This is Acid ceramidase from Balaenoptera acutorostrata scammoni (North Pacific minke whale).